A 41-amino-acid polypeptide reads, in one-letter code: Pi-stichotoxin-Hcr5a (41 aa).

3 disulfide bridges follow: cysteine 4–cysteine 37, cysteine 6–cysteine 30, and cysteine 20–cysteine 38.

This sequence belongs to the sea anemone type 3 (BDS) potassium channel toxin family.

The protein localises to the secreted. Its subcellular location is the nematocyst. In terms of biological role, weakly inhibits human homomeric ASIC3 (IC(50)=5.5 uM). The polypeptide is Pi-stichotoxin-Hcr5a (Radianthus crispa (Leathery sea anemone)).